Here is a 492-residue protein sequence, read N- to C-terminus: Zinc finger protein GLIS2 (492 aa).

Positions 49–101 are disordered; that stretch reads VITPICSSPPPGFRYRDGDSPPFSSPPIVDLSLSPPSGTDSPSRSSLSPDRAA. A transcription activation region spans residues 69–129; sequence PPFSSPPIVD…SPFQFFLPLG (61 aa). The segment covering 82–97 has biased composition (low complexity); it reads SPPSGTDSPSRSSLSP. The segment at 138–161 is transcription repression; sequence MFMSPPKENRLSLEFTEQKQLVCQ. The segment at 158–183 adopts a C2H2-type 1 zinc-finger fold; sequence LVCQWAKCNRLFELLQELVDHVNDFH. The C2H2-type 2; degenerate zinc finger occupies 192-219; that stretch reads YCCHWEGCARRGRGFNARYKMLIHIRTH. 3 C2H2-type zinc fingers span residues 225–247, 253–277, and 283–307; these read HCCP…NRSH, YMCP…TRTH, and YYCK…IKAH. The span at 423–444 shows a compositional bias: basic and acidic residues; sequence VENEKRPKGQRGDSSERTDGSK. Positions 423–450 are disordered; the sequence is VENEKRPKGQRGDSSERTDGSKLRPGSI.

This sequence belongs to the GLI C2H2-type zinc-finger protein family.

The protein localises to the nucleus speckle. The protein resides in the cytoplasm. Its function is as follows. Can act either as a transcription repressor or as a transcription activator, depending on the cell context. May be involved in neuron differentiation. This chain is Zinc finger protein GLIS2 (glis2), found in Xenopus laevis (African clawed frog).